Consider the following 248-residue polypeptide: Granulin (248 aa).

It belongs to the polyhedrin family.

Functionally, component of the virus occlusion bodies, which are large proteinaceous structures, that protect the virus from the outside environment for extended periods until they are ingested by insect larvae. The protein is Granulin of Xestia c-nigrum granulosis virus (XnGV).